A 272-amino-acid chain; its full sequence is 3-methyl-2-oxobutanoate hydroxymethyltransferase (272 aa).

2 residues coordinate Mg(2+): Asp51 and Asp90. Residues 51–52 (DS), Asp90, and Lys118 each bind 3-methyl-2-oxobutanoate. Glu120 serves as a coordination point for Mg(2+). The active-site Proton acceptor is the Glu187.

Belongs to the PanB family. As to quaternary structure, homodecamer; pentamer of dimers. The cofactor is Mg(2+).

Its subcellular location is the cytoplasm. The catalysed reaction is 3-methyl-2-oxobutanoate + (6R)-5,10-methylene-5,6,7,8-tetrahydrofolate + H2O = 2-dehydropantoate + (6S)-5,6,7,8-tetrahydrofolate. The protein operates within cofactor biosynthesis; (R)-pantothenate biosynthesis; (R)-pantoate from 3-methyl-2-oxobutanoate: step 1/2. Catalyzes the reversible reaction in which hydroxymethyl group from 5,10-methylenetetrahydrofolate is transferred onto alpha-ketoisovalerate to form ketopantoate. This is 3-methyl-2-oxobutanoate hydroxymethyltransferase from Xylella fastidiosa (strain M12).